A 239-amino-acid polypeptide reads, in one-letter code: Ribosomal RNA large subunit methyltransferase E (239 aa).

The interval 1-20 (MTKAPIAGNRTGRKLGQRVK) is disordered. The segment covering 11-20 (TGRKLGQRVK) has biased composition (basic residues). G81, W83, D104, D120, and D144 together coordinate S-adenosyl-L-methionine. The active-site Proton acceptor is the K184.

Belongs to the class I-like SAM-binding methyltransferase superfamily. RNA methyltransferase RlmE family.

It is found in the cytoplasm. It carries out the reaction uridine(2552) in 23S rRNA + S-adenosyl-L-methionine = 2'-O-methyluridine(2552) in 23S rRNA + S-adenosyl-L-homocysteine + H(+). Specifically methylates the uridine in position 2552 of 23S rRNA at the 2'-O position of the ribose in the fully assembled 50S ribosomal subunit. The chain is Ribosomal RNA large subunit methyltransferase E from Rhizobium leguminosarum bv. trifolii (strain WSM2304).